We begin with the raw amino-acid sequence, 185 residues long: Transposon Tn3 resolvase (185 aa).

The Resolvase/invertase-type recombinase catalytic domain occupies 2-137 (RIFGYARVST…EGRQEAKLKG (136 aa)). S10 serves as the catalytic O-(5'-phospho-DNA)-serine intermediate. A DNA-binding region (H-T-H motif) is located at residues 161-180 (ATEIAHQLSIARSTVYKILE).

It belongs to the site-specific recombinase resolvase family.

Functionally, resolvase catalyzes the resolution (a site-specific recombination) of the cointegrated replicon to yield the final transposition products. The chain is Transposon Tn3 resolvase (tnpR) from Escherichia coli.